Consider the following 295-residue polypeptide: Universal stress protein Mb2028c (295 aa).

ATP-binding positions include G13, G117 to A123, S131 to V132, G165, D198, G262 to G268, and S276 to S278.

Belongs to the universal stress protein A family.

This chain is Universal stress protein Mb2028c, found in Mycobacterium bovis (strain ATCC BAA-935 / AF2122/97).